A 215-amino-acid chain; its full sequence is Pyrrolidone-carboxylate peptidase (215 aa).

Active-site residues include Glu-80, Cys-143, and His-167.

This sequence belongs to the peptidase C15 family. Homotetramer.

It is found in the cytoplasm. The enzyme catalyses Release of an N-terminal pyroglutamyl group from a polypeptide, the second amino acid generally not being Pro.. In terms of biological role, removes 5-oxoproline from various penultimate amino acid residues except L-proline. This is Pyrrolidone-carboxylate peptidase from Bacillus anthracis.